The following is a 79-amino-acid chain: D-alanyl carrier protein (79 aa).

In terms of domain architecture, Carrier spans 1–77 (MDVKAEVIEI…KIVEGVTELR (77 aa)). At serine 35 the chain carries O-(pantetheine 4'-phosphoryl)serine.

It belongs to the DltC family. 4'-phosphopantetheine is transferred from CoA to a specific serine of apo-DCP.

The protein resides in the cytoplasm. It functions in the pathway cell wall biogenesis; lipoteichoic acid biosynthesis. Its function is as follows. Carrier protein involved in the D-alanylation of lipoteichoic acid (LTA). The loading of thioester-linked D-alanine onto DltC is catalyzed by D-alanine--D-alanyl carrier protein ligase DltA. The DltC-carried D-alanyl group is further transferred to cell membrane phosphatidylglycerol (PG) by forming an ester bond, probably catalyzed by DltD. D-alanylation of LTA plays an important role in modulating the properties of the cell wall in Gram-positive bacteria, influencing the net charge of the cell wall. The chain is D-alanyl carrier protein from Streptococcus gordonii (strain Challis / ATCC 35105 / BCRC 15272 / CH1 / DL1 / V288).